We begin with the raw amino-acid sequence, 59 residues long: Embryonic testis differentiation protein homolog C (59 aa).

Residues 1-22 (MDKELPKASPSEPALNIKKSGK) form a disordered region.

In Homo sapiens (Human), this protein is Embryonic testis differentiation protein homolog C.